The sequence spans 618 residues: MAISIHPPRDPNTLSNYNNWICTHITANFDILFDQKKLVGNVIHKLKSTTNGESQEIILDSNHVAIGDVKIDGRPSEWELLPPLEPYGSALKIKLDQGVNLNETIDVEISVQTTEKCTALQWLTPAQTSNKKHPYMFSQCQAIHARSIFPCQDTPDVKSTIDFNISSPLPVIASGLPVRDALGASKSEGKSLYQFHQRVPIPSYLFALASGDISEAAIGPRSVVATSPDKVQECQWELEADTEKFIGAIEKIVYPYAWGEYNVLILPPSFPYGGMENPIFTFATPSIISKDRENIDVIAHELAHSWSGNLVTNASWEHFWLNEGWTTYLERRILAAVHGEAYRHFSAIIGWKALTDSVEHFGHDHEFTKLITDLKGKDPDDAFSSIPYEKGFNFLFHLETLVGKQKFDRFIPHYFTVFKGKSLDSYEFKATLLDFFGTDAEASKLLNDLDWDTWFYAPGLPPKPQFDTSLVDVVYELAQKWKSLSETSSFKPQLSDIESLSANQIVVFLEQMLLLERPLTPELSKLMGEVYGLSKSENIEVANLYFQLGLKAGDENVVDPATELLGRIGRMKFVRPLFRSLQRVNREVAVATFEKYKDFYHPICRAMVEKDLFGKRDV.

Residues 139–141 and 271–276 contribute to the a peptide site; these read QCQ and PYGGME. Zn(2+) is bound at residue His300. Catalysis depends on Glu301, which acts as the Proton acceptor. Residues His304 and Glu323 each contribute to the Zn(2+) site. Catalysis depends on Tyr388, which acts as the Proton donor.

It belongs to the peptidase M1 family. Requires Zn(2+) as cofactor.

It is found in the cytoplasm. The protein resides in the nucleus. It carries out the reaction an epoxide + H2O = an ethanediol. In terms of biological role, aminopeptidase that preferentially cleaves di- and tripeptides. Also has low epoxide hydrolase activity (in vitro). Can hydrolyze the epoxide leukotriene LTA(4) but it forms preferentially 5,6-dihydroxy-7,9,11,14-eicosatetraenoic acid rather than the cytokine leukotriene B(4) as the product compared to the homologous mammalian enzyme (in vitro). In Aspergillus niger (strain ATCC MYA-4892 / CBS 513.88 / FGSC A1513), this protein is Leucine aminopeptidase 2.